The following is a 219-amino-acid chain: MSKKSLSEDAQEVFRAIALIELGARMQVLESELTLSRERMIRLYREVKGVSPPKGMLPFSADWYTTWLANIHASLFYNTYRFLRDEARCSHLDALTKGYRLYLEHCRHNQTEPVLDLTRAWTLVRFFDANILQLTPCCRCSGKFIGHKHDLQHNVVCDACQPPSRAGKTKKAAAAKRDAQPQLVEVQHAANDVETIAVESLAAVETVAPGVFEEAVLAA.

Cys137, Cys140, Cys157, and Cys160 together coordinate Zn(2+).

The protein belongs to the FlhC family. As to quaternary structure, heterohexamer composed of two FlhC and four FlhD subunits. Each FlhC binds a FlhD dimer, forming a heterotrimer, and a hexamer assembles by dimerization of two heterotrimers. The cofactor is Zn(2+).

It is found in the cytoplasm. In terms of biological role, functions in complex with FlhD as a master transcriptional regulator that regulates transcription of several flagellar and non-flagellar operons by binding to their promoter region. Activates expression of class 2 flagellar genes, including fliA, which is a flagellum-specific sigma factor that turns on the class 3 genes. Also regulates genes whose products function in a variety of physiological pathways. This chain is Flagellar transcriptional regulator FlhC, found in Paraburkholderia phymatum (strain DSM 17167 / CIP 108236 / LMG 21445 / STM815) (Burkholderia phymatum).